A 175-amino-acid chain; its full sequence is Protein-export protein SecB (175 aa).

Belongs to the SecB family. Homotetramer, a dimer of dimers. One homotetramer interacts with 1 SecA dimer.

Its subcellular location is the cytoplasm. In terms of biological role, one of the proteins required for the normal export of preproteins out of the cell cytoplasm. It is a molecular chaperone that binds to a subset of precursor proteins, maintaining them in a translocation-competent state. It also specifically binds to its receptor SecA. The chain is Protein-export protein SecB from Anaplasma marginale (strain Florida).